We begin with the raw amino-acid sequence, 196 residues long: Molybdenum cofactor guanylyltransferase (196 aa).

Residues 10 to 12 (LAG), Lys-23, Asn-51, Asp-69, and Asp-99 contribute to the GTP site. Asp-99 contacts Mg(2+).

It belongs to the MobA family. Monomer. It depends on Mg(2+) as a cofactor.

It localises to the cytoplasm. The catalysed reaction is Mo-molybdopterin + GTP + H(+) = Mo-molybdopterin guanine dinucleotide + diphosphate. Transfers a GMP moiety from GTP to Mo-molybdopterin (Mo-MPT) cofactor (Moco or molybdenum cofactor) to form Mo-molybdopterin guanine dinucleotide (Mo-MGD) cofactor. The polypeptide is Molybdenum cofactor guanylyltransferase (Shewanella loihica (strain ATCC BAA-1088 / PV-4)).